The following is a 383-amino-acid chain: Probable cell wall hydrolase LytN (383 aa).

A signal peptide spans 1–49 (MFIYYCKECSIMNKQQSKVRYSIRKVSIGILSISIGMFLALGMSNKAYA). A LysM domain is found at 175–219 (QIYTVKKGDTLSAIALKYKTTVSNIQNTNNIANPNLIFIGQKLKV). Residues 241-378 (NSSTLNYLKT…NYENDMIFIR (138 aa)) form the Peptidase C51 domain.

The protein localises to the secreted. Its function is as follows. Probably involved in peptidoglycan hydrolysis. The protein is Probable cell wall hydrolase LytN (lytN) of Staphylococcus aureus (strain Mu50 / ATCC 700699).